A 148-amino-acid chain; its full sequence is MNIVPQDTFKSQVSTDQDKSVLSSAVPSLPDTLRQQEGGAVPLSTQLNDRHPLESTLKNWETTQRQRQMEQYRQIFGIAEPMKRTMEMEIVNRTDFNPLSTNGSIHRDILLNKECSIDWEDVYPGTGLQASTMVGDDVHSKIEKQLGI.

Residues M1–Q35 are disordered. Over residues T8–V26 the composition is skewed to polar residues.

It belongs to the POMP/UMP1 family. Post-translationally, seems to be degraded by the proteasome upon its formation.

Its function is as follows. Short-lived chaperone present in the precursor form of the 20S proteasome and absent in the mature complex. Required for the correct assembly and enzymatic activation of the proteasome. Also prevents premature processing of the PRE2 propeptide. The polypeptide is Proteasome maturation factor UMP1 (UMP1) (Saccharomyces cerevisiae (strain ATCC 204508 / S288c) (Baker's yeast)).